A 372-amino-acid polypeptide reads, in one-letter code: Glutamate 5-kinase (372 aa).

Lysine 14 serves as a coordination point for ATP. Substrate is bound by residues serine 54, aspartate 141, and asparagine 153. 173–174 (TD) is a binding site for ATP. The PUA domain occupies 280-358 (RGHVVIDAGA…GEIETVLGYM (79 aa)).

This sequence belongs to the glutamate 5-kinase family.

It localises to the cytoplasm. It catalyses the reaction L-glutamate + ATP = L-glutamyl 5-phosphate + ADP. It participates in amino-acid biosynthesis; L-proline biosynthesis; L-glutamate 5-semialdehyde from L-glutamate: step 1/2. Functionally, catalyzes the transfer of a phosphate group to glutamate to form L-glutamate 5-phosphate. This chain is Glutamate 5-kinase, found in Burkholderia orbicola (strain AU 1054).